A 328-amino-acid polypeptide reads, in one-letter code: Malate dehydrogenase (328 aa).

NAD(+) is bound at residue 12–18 (GAAGQIA). The substrate site is built by Arg-93 and Arg-99. NAD(+) is bound by residues Asn-106, Gln-113, and 130–132 (VGN). Asn-132 and Arg-163 together coordinate substrate. Catalysis depends on His-188, which acts as the Proton acceptor.

Belongs to the LDH/MDH superfamily. MDH type 2 family.

The enzyme catalyses (S)-malate + NAD(+) = oxaloacetate + NADH + H(+). Catalyzes the reversible oxidation of malate to oxaloacetate. This is Malate dehydrogenase from Burkholderia multivorans (strain ATCC 17616 / 249).